The following is a 603-amino-acid chain: UvrABC system protein C (603 aa).

Positions 15–92 (DQPGCYLMKN…IQKHQPYYNI (78 aa)) constitute a GIY-YIG domain. A UVR domain is found at 197–232 (AQVKKQLTARMERAAGQLEFERAAEIRDQLHYIEVT).

The protein belongs to the UvrC family. In terms of assembly, interacts with UvrB in an incision complex.

The protein localises to the cytoplasm. Its function is as follows. The UvrABC repair system catalyzes the recognition and processing of DNA lesions. UvrC both incises the 5' and 3' sides of the lesion. The N-terminal half is responsible for the 3' incision and the C-terminal half is responsible for the 5' incision. The chain is UvrABC system protein C from Limosilactobacillus fermentum (strain NBRC 3956 / LMG 18251) (Lactobacillus fermentum).